The following is a 312-amino-acid chain: Ribosomal RNA small subunit methyltransferase H (312 aa).

Residues 35–37 (GGH), D55, F79, D101, and Q108 each bind S-adenosyl-L-methionine. The interval 286-306 (LKPSEHEVNENSRSRSSVLRV) is disordered. Over residues 287-298 (KPSEHEVNENSR) the composition is skewed to basic and acidic residues.

Belongs to the methyltransferase superfamily. RsmH family.

It localises to the cytoplasm. It carries out the reaction cytidine(1402) in 16S rRNA + S-adenosyl-L-methionine = N(4)-methylcytidine(1402) in 16S rRNA + S-adenosyl-L-homocysteine + H(+). In terms of biological role, specifically methylates the N4 position of cytidine in position 1402 (C1402) of 16S rRNA. In Aeromonas hydrophila subsp. hydrophila (strain ATCC 7966 / DSM 30187 / BCRC 13018 / CCUG 14551 / JCM 1027 / KCTC 2358 / NCIMB 9240 / NCTC 8049), this protein is Ribosomal RNA small subunit methyltransferase H.